Consider the following 271-residue polypeptide: MAGAPRRQRAVGRVRLGVNAIAGKSRVSDVAEAGSLRVRMPRVDGPAVEGVLVNTAGGVACGDHFTIEVKAEAGAHAVVATPAAEKIYRSDGETARIDVAITVEAGAQVDWLPQETLLYDAARLARRFTVDLAPDATFLAFEAIAFGRVARGEEMRTGHLEDHWQVTRGGGLIYADAVRVSGPLGELLRRPTVAAGNRAWATLLYVAPDAEARLDEARALMESARSECGASAWNGLLAARWLAPDIETLRRDAVAFLNAFRGAPLPRVWAL.

This sequence belongs to the UreD family. In terms of assembly, ureD, UreF and UreG form a complex that acts as a GTP-hydrolysis-dependent molecular chaperone, activating the urease apoprotein by helping to assemble the nickel containing metallocenter of UreC. The UreE protein probably delivers the nickel.

It is found in the cytoplasm. Required for maturation of urease via the functional incorporation of the urease nickel metallocenter. The sequence is that of Urease accessory protein UreD from Azorhizobium caulinodans (strain ATCC 43989 / DSM 5975 / JCM 20966 / LMG 6465 / NBRC 14845 / NCIMB 13405 / ORS 571).